We begin with the raw amino-acid sequence, 831 residues long: Valine--tRNA ligase (831 aa).

Residues 77–87 (PFTSGELHMGH) carry the 'HIGH' region motif. The 'KMSKS' region signature appears at 564–568 (RMSKS). K567 is an ATP binding site.

It belongs to the class-I aminoacyl-tRNA synthetase family. ValS type 2 subfamily.

The protein localises to the cytoplasm. It carries out the reaction tRNA(Val) + L-valine + ATP = L-valyl-tRNA(Val) + AMP + diphosphate. Its function is as follows. Catalyzes the attachment of valine to tRNA(Val). As ValRS can inadvertently accommodate and process structurally similar amino acids such as threonine, to avoid such errors, it has a 'posttransfer' editing activity that hydrolyzes mischarged Thr-tRNA(Val) in a tRNA-dependent manner. The polypeptide is Valine--tRNA ligase (Sulfolobus acidocaldarius (strain ATCC 33909 / DSM 639 / JCM 8929 / NBRC 15157 / NCIMB 11770)).